A 717-amino-acid chain; its full sequence is Probable E3 ubiquitin-protein ligase WAVH2 (717 aa).

Composition is skewed to polar residues over residues 13–28 and 85–94; these read VSSNQDKPQQHSSLHT and RTTSNATPRT. A disordered region spans residues 13–120; the sequence is VSSNQDKPQQ…SSSSSSSQGG (108 aa). The segment covering 95–117 has biased composition (low complexity); the sequence is SNSSSPKFFSNPSSPKSSSSSSS. The segment at 140–184 adopts an RING-type; atypical zinc-finger fold; the sequence is CAICLQRVNSNQSNSTAAIFTAECSHSFHLSCVNGLEDKRCPFCS. Residues 326–456 form the VWFA domain; that stretch reads DLVTVLDLSN…LNATRIPFVV (131 aa).

Expressed in root tips, cotyledons, leaf primordia and hypocotyls.

The enzyme catalyses S-ubiquitinyl-[E2 ubiquitin-conjugating enzyme]-L-cysteine + [acceptor protein]-L-lysine = [E2 ubiquitin-conjugating enzyme]-L-cysteine + N(6)-ubiquitinyl-[acceptor protein]-L-lysine.. In terms of biological role, probable E3 ubiquitin-protein ligase involved in the regulation of root growth. Acts as a positive regulator of root gravitropism. The chain is Probable E3 ubiquitin-protein ligase WAVH2 from Arabidopsis thaliana (Mouse-ear cress).